A 277-amino-acid chain; its full sequence is Shikimate dehydrogenase (NADP(+)) (277 aa).

Residues 15-17 (SLS) and Thr62 each bind shikimate. Residue Lys66 is the Proton acceptor of the active site. Shikimate contacts are provided by Asn87 and Asp102. NADP(+)-binding positions include 127 to 131 (GAGGA), 151 to 156 (NRTVDK), and Ile219. Residue Tyr221 coordinates shikimate. Gly242 serves as a coordination point for NADP(+).

This sequence belongs to the shikimate dehydrogenase family. Homodimer.

The catalysed reaction is shikimate + NADP(+) = 3-dehydroshikimate + NADPH + H(+). It participates in metabolic intermediate biosynthesis; chorismate biosynthesis; chorismate from D-erythrose 4-phosphate and phosphoenolpyruvate: step 4/7. Its function is as follows. Involved in the biosynthesis of the chorismate, which leads to the biosynthesis of aromatic amino acids. Catalyzes the reversible NADPH linked reduction of 3-dehydroshikimate (DHSA) to yield shikimate (SA). This is Shikimate dehydrogenase (NADP(+)) from Bacillus cereus (strain AH187).